The sequence spans 344 residues: Putative 2-hydroxyacid dehydrogenase YoaD (344 aa).

Aspartate 193 contributes to the NAD(+) binding site. Arginine 251 is an active-site residue. Aspartate 275 lines the NAD(+) pocket. Glutamate 280 is an active-site residue. The active-site Proton donor is histidine 300.

This sequence belongs to the D-isomer specific 2-hydroxyacid dehydrogenase family.

In Bacillus subtilis (strain 168), this protein is Putative 2-hydroxyacid dehydrogenase YoaD (yoaD).